Consider the following 417-residue polypeptide: Calreticulin (417 aa).

A signal peptide spans 1 to 17; it reads MLLPVPLLLGLVGLAAA. The segment at 18-197 is N-domain; sequence EPTIYFKEQF…NSQVESGSLE (180 aa). Residues Gln-26, Lys-62, and Lys-64 each contribute to the Ca(2+) site. Residue Lys-64 is modified to N6-(2-hydroxyisobutyryl)lysine. 4 residues coordinate an alpha-D-glucoside: Tyr-109, Lys-111, Tyr-128, and Asp-135. An intrachain disulfide couples Cys-137 to Cys-163. Position 159 is an N6-acetyllysine (Lys-159). A 1-1 repeat occupies 191–202; it reads VESGSLEDDWDF. The tract at residues 191 to 255 is 4 X approximate repeats; the sequence is VESGSLEDDW…DAKKPEDWDE (65 aa). Residues 193–277 form a disordered region; sequence SGSLEDDWDF…NPEYKGEWKP (85 aa). The tract at residues 198–308 is P-domain; the sequence is DDWDFLPPKK…YSPDSNIYAY (111 aa). A compositionally biased stretch (basic and acidic residues) spans 207-251; it reads KIKDPDAVKPEDWDERAKIDDPTDSKPEDWDKPEHIPDPDAKKPE. Lys-209 bears the N6-acetyllysine mark. Repeat copies occupy residues 210-221, 227-238, 244-255, 259-269, 273-283, and 287-297. Residues 237-270 form an interaction with PPIB region; sequence DKPEHIPDPDAKKPEDWDEEMDGEWEPPVIQNPE. The segment covering 252–261 has biased composition (acidic residues); the sequence is DWDEEMDGEW. Residues 259–297 are 3 X approximate repeats; it reads GEWEPPVIQNPEYKGEWKPRQIDNPDYKGTWIHPEIDNP. A C-domain region spans residues 309–417; the sequence is ENFAVLGLDL…AAAGQAKDEL (109 aa). Asp-317 is a binding site for an alpha-D-glucoside. Asp-328 serves as a coordination point for Ca(2+). A disordered region spans residues 350-417; sequence TKAAEKQMKD…AAAGQAKDEL (68 aa). Residues 352–379 show a composition bias toward basic and acidic residues; that stretch reads AAEKQMKDKQDEEQRLKEEEEEKKRKEE. Over residues 380-408 the composition is skewed to acidic residues; that stretch reads EEVDKEDEEDKDEDEEEEDEKEEEEEEDA. The short motif at 414-417 is the Prevents secretion from ER element; sequence KDEL.

It belongs to the calreticulin family. Monomer. Component of an EIF2 complex at least composed of CELF1/CUGBP1, CALR, CALR3, EIF2S1, EIF2S2, HSP90B1 and HSPA5. Interacts with PDIA3/ERp57 and SPACA9. Interacts with TRIM21. Interacts with NR3C1. Interacts with PPIB. Interacts (via P-domain) with PDIA5. Interacts with CLCC1. As to expression, in blastocyst expressed in all blastomeres (at protein level). In embryos, expressed in spleen, kidney, liver, fat, muscle, ovary, granulosa cells and cumulus cells.

It localises to the endoplasmic reticulum lumen. The protein localises to the cytoplasm. The protein resides in the cytosol. It is found in the secreted. Its subcellular location is the extracellular space. It localises to the extracellular matrix. The protein localises to the cell surface. The protein resides in the sarcoplasmic reticulum lumen. It is found in the cytoplasmic vesicle. Its subcellular location is the secretory vesicle. It localises to the cortical granule. The protein localises to the cytolytic granule. Its function is as follows. Calcium-binding chaperone that promotes folding, oligomeric assembly and quality control in the endoplasmic reticulum (ER) via the calreticulin/calnexin cycle. This lectin interacts transiently with almost all of the monoglucosylated glycoproteins that are synthesized in the ER. Interacts with the DNA-binding domain of NR3C1 and mediates its nuclear export. Involved in maternal gene expression regulation. May participate in oocyte maturation via the regulation of calcium homeostasis. Present in the cortical granules of non-activated oocytes, is exocytosed during the cortical reaction in response to oocyte activation and might participate in the block to polyspermy. The protein is Calreticulin (CALR) of Sus scrofa (Pig).